The following is a 575-amino-acid chain: MTYFPEEVVEHIFSFLPAQRDRNTVSLVCKVWYEIERLSRRGVFVGNCYAVRAGRVAARFPNVRALTVKGKPHFADFNLVPPDWGGYAGPWIEAAARGCHGLEELRMKRMVVSDESLELLARSFPRFRALVLISCEGFSTDGLAAVASHCKLLRELDLQENEVEDRGPRWLSCFPDSCTSLVSLNFACIKGEVNAGSLERLVSRSPNLRSLRLNRSVSVDTLAKILLRTPNLEDLGTGNLTDDFQTESYFKLTSALEKCKMLRSLSGFWDASPVCLSFIYPLCAQLTGLNLSYAPTLDASDLTKMISRCVKLQRLWVLDCISDKGLQVVASSCKDLQELRVFPSDFYVAGYSAVTEEGLVAVSLGCPKLNSLLYFCHQMTNAALVTVAKNCPNFTRFRLCILEPGKPDVVTSQPLDEGFGAIVRECKGLQRLSISGLLTDKVFMYIGKYAKQLEMLSIAFAGDSDKGMMHVMNGCKNLRKLEIRDSPFGDAALLGNFARYETMRSLWMSSCNVTLKGCQVLASKMPMLNVEVINERDGSNEMEENHGDLPKVEKLYVYRTTAGARDDAPNFVKIL.

In terms of domain architecture, F-box spans 1–45 (MTYFPEEVVEHIFSFLPAQRDRNTVSLVCKVWYEIERLSRRGVFV). Residue Lys-69 participates in 1D-myo-inositol hexakisphosphate binding. The segment at 76–77 (DF) is interaction with auxin-responsive proteins. 1D-myo-inositol hexakisphosphate contacts are provided by residues 108–109 (KR) and Arg-340. Residues 343 to 348 (PSDFYV) are interaction with auxin-responsive proteins. 396–398 (RFR) provides a ligand contact to 1D-myo-inositol hexakisphosphate. The interaction with auxin-responsive proteins stretch occupies residues 400-404 (CILEP). Arg-431 lines the 1D-myo-inositol hexakisphosphate pocket. The tract at residues 459 to 460 (AF) is interaction with auxin-responsive proteins. 1D-myo-inositol hexakisphosphate-binding positions include 479–480 (RK) and Arg-504.

Part of a SCF (SKP1-cullin-F-box) protein ligase complex. May interact with auxin and auxin-responsive proteins.

It localises to the nucleus. The protein operates within protein modification; protein ubiquitination. The protein is Transport inhibitor response 1-like protein Os04g0395600 of Oryza sativa subsp. japonica (Rice).